A 288-amino-acid polypeptide reads, in one-letter code: MDSIKIALQYMLPKHFLSRLVGKFAAAEAGAITTAVIKWFIKQYKIDMSEAQQPEPEAYKTFNAFFTRALKPELRPICQESNMMAHPVDGAVSQCGPIEAGNIFQAKGHSYTSEALLGGNKTDAARFDGGDFATIYLAPKDYHRLHMPITGTLSKMTYVPGDLFSVNPLTAQNVPGLFARNERVVAIFETEVGPLAMVLVGATIVASIETIWSGTVTPPGGKQVFSWDYPTTGPEAVTLEKGAEMGRFKLGSTVVMLFAQDAIETFADGVEPGETTRMGQPFARLKQQ.

Catalysis depends on charge relay system; for autoendoproteolytic cleavage activity residues aspartate 89, histidine 146, and serine 252. Serine 252 functions as the Schiff-base intermediate with substrate; via pyruvic acid; for decarboxylase activity in the catalytic mechanism. Position 252 is a pyruvic acid (Ser); by autocatalysis (serine 252).

This sequence belongs to the phosphatidylserine decarboxylase family. PSD-B subfamily. Prokaryotic type I sub-subfamily. Heterodimer of a large membrane-associated beta subunit and a small pyruvoyl-containing alpha subunit. Pyruvate is required as a cofactor. Is synthesized initially as an inactive proenzyme. Formation of the active enzyme involves a self-maturation process in which the active site pyruvoyl group is generated from an internal serine residue via an autocatalytic post-translational modification. Two non-identical subunits are generated from the proenzyme in this reaction, and the pyruvate is formed at the N-terminus of the alpha chain, which is derived from the carboxyl end of the proenzyme. The autoendoproteolytic cleavage occurs by a canonical serine protease mechanism, in which the side chain hydroxyl group of the serine supplies its oxygen atom to form the C-terminus of the beta chain, while the remainder of the serine residue undergoes an oxidative deamination to produce ammonia and the pyruvoyl prosthetic group on the alpha chain. During this reaction, the Ser that is part of the protease active site of the proenzyme becomes the pyruvoyl prosthetic group, which constitutes an essential element of the active site of the mature decarboxylase.

It is found in the cell membrane. It catalyses the reaction a 1,2-diacyl-sn-glycero-3-phospho-L-serine + H(+) = a 1,2-diacyl-sn-glycero-3-phosphoethanolamine + CO2. It participates in phospholipid metabolism; phosphatidylethanolamine biosynthesis; phosphatidylethanolamine from CDP-diacylglycerol: step 2/2. In terms of biological role, catalyzes the formation of phosphatidylethanolamine (PtdEtn) from phosphatidylserine (PtdSer). This chain is Phosphatidylserine decarboxylase proenzyme, found in Shewanella frigidimarina (strain NCIMB 400).